We begin with the raw amino-acid sequence, 170 residues long: SKP1-like protein 16 (170 aa).

The tract at residues 109-167 is interaction with the F-box domain of F-box proteins; the sequence is ILAVNYLNVQDLLGLTCQTVADHMKDMSPEEVRELFNIENDYTPEEEDAIRKENAWAFE.

It belongs to the SKP1 family. Part of a SCF (SKP1-cullin-F-box) protein ligase complex. Interacts with CPR1/CPR30, At3g61590 and At4g11590. In terms of tissue distribution, mainly detected in the siliques.

Its subcellular location is the nucleus. It functions in the pathway protein modification; protein ubiquitination. Functionally, involved in ubiquitination and subsequent proteasomal degradation of target proteins. Together with CUL1, RBX1 and a F-box protein, it forms a SCF E3 ubiquitin ligase complex. The functional specificity of this complex depends on the type of F-box protein. In the SCF complex, it serves as an adapter that links the F-box protein to CUL1. This Arabidopsis thaliana (Mouse-ear cress) protein is SKP1-like protein 16 (ASK16).